The primary structure comprises 226 residues: Transmembrane gamma-carboxyglutamic acid protein 4 (226 aa).

Positions 1-17 are cleaved as a signal peptide; it reads MFPLLIVLSQLPRLTLA. The propeptide occupies 18–49; sequence VPHCIRSLKDSEHAPEEVFASKEAANIFMHRR. Residues 50 to 113 lie on the Extracellular side of the membrane; the sequence is LLNNRFDLEL…GSDVNKEKID (64 aa). Residues 52–98 enclose the Gla domain; sequence NNRFDLELFTPGDLERECYEEFCSYEEAREILGDDENTIKFWQTYSI. A disulfide bond links Cys-69 and Cys-74. At Glu-72 the chain carries 4-carboxyglutamate. Residues 114–134 traverse the membrane as a helical segment; it reads VMSLLTGLIVAGVFLVIFGLV. The Cytoplasmic segment spans residues 135–226; that stretch reads GYYVCLTKCK…FKKSMSLPSH (92 aa). Ser-164 is subject to Phosphoserine. The LPXY motif; mediates binding to WW domain-containing proteins motif lies at 186-189; it reads LPSY. The short motif at 204–207 is the PPXY motif; mediates binding to WW domain-containing proteins element; that stretch reads PPPY.

It belongs to the commissureless family. As to quaternary structure, interacts (via cytoplasmic domain) with WW domain-containing proteins MAGI1, MAGI3, NEDD4, NEDD4L, WWTR1/TAZ and YAP1. In terms of processing, gamma-carboxyglutamate residues are formed by vitamin K dependent carboxylation. These residues are essential for the binding of calcium.

It localises to the endoplasmic reticulum-Golgi intermediate compartment membrane. The protein localises to the cell membrane. In terms of biological role, may control axon guidance across the CNS. Prevents the delivery of ROBO1 at the cell surface and down-regulates its expression. The protein is Transmembrane gamma-carboxyglutamic acid protein 4 (Prrg4) of Mus musculus (Mouse).